Consider the following 435-residue polypeptide: GTPase Der (435 aa).

EngA-type G domains follow at residues 2–167 and 178–351; these read ATVV…RESG and PKIA…ESYC. GTP-binding positions include 8-15, 55-59, 118-121, 184-191, 231-235, and 297-300; these read GRANVGKS, DTCGV, NKSE, GKPNVGKS, DTAGM, and NKFD. Residues 352-435 form the KH-like domain; that stretch reads RKVPQQLLSK…PLVIEFKSRR (84 aa).

Belongs to the TRAFAC class TrmE-Era-EngA-EngB-Septin-like GTPase superfamily. EngA (Der) GTPase family. As to quaternary structure, associates with the 50S ribosomal subunit.

GTPase that plays an essential role in the late steps of ribosome biogenesis. The protein is GTPase Der of Pseudothermotoga lettingae (strain ATCC BAA-301 / DSM 14385 / NBRC 107922 / TMO) (Thermotoga lettingae).